Consider the following 654-residue polypeptide: MICOS complex subunit MIC60-2 (654 aa).

A mitochondrion-targeting transit peptide spans 1–12 (MRGSRNLLTQRL). Residues 13–20 (ASSRATGS) are Mitochondrial matrix-facing. A helical transmembrane segment spans residues 21-43 (SGGLKFVGATVGAVTAGAAGVAG). Residues 44 to 654 (YASYDNEFRK…AALTSIRSTY (611 aa)) lie on the Mitochondrial intermembrane side of the membrane. Basic and acidic residues predominate over residues 115-129 (LKETTEPKKIEKKPE). Positions 115–140 (LKETTEPKKIEKKPENPYIGAKTPLN) are disordered.

Belongs to the MICOS complex subunit Mic60 family. Component of the mitochondrial contact site and cristae organizing system (MICOS) complex. As to expression, expressed in the gonads and muscle cells.

Its subcellular location is the mitochondrion inner membrane. The protein resides in the cytoplasm. Sustains mitochondrial morphology probably through maintaining cristae morphology. May act as a component of the MICOS complex, a large protein complex of the mitochondria. This chain is MICOS complex subunit MIC60-2, found in Caenorhabditis elegans.